A 241-amino-acid chain; its full sequence is Ubiquinone biosynthesis O-methyltransferase (241 aa).

S-adenosyl-L-methionine-binding residues include R46, G66, D87, and M131.

Belongs to the methyltransferase superfamily. UbiG/COQ3 family.

The enzyme catalyses a 3-demethylubiquinol + S-adenosyl-L-methionine = a ubiquinol + S-adenosyl-L-homocysteine + H(+). It carries out the reaction a 3-(all-trans-polyprenyl)benzene-1,2-diol + S-adenosyl-L-methionine = a 2-methoxy-6-(all-trans-polyprenyl)phenol + S-adenosyl-L-homocysteine + H(+). It participates in cofactor biosynthesis; ubiquinone biosynthesis. In terms of biological role, O-methyltransferase that catalyzes the 2 O-methylation steps in the ubiquinone biosynthetic pathway. This chain is Ubiquinone biosynthesis O-methyltransferase, found in Bordetella bronchiseptica (strain ATCC BAA-588 / NCTC 13252 / RB50) (Alcaligenes bronchisepticus).